Consider the following 212-residue polypeptide: Large ribosomal subunit protein uL3 (212 aa).

An N5-methylglutamine modification is found at Q153.

The protein belongs to the universal ribosomal protein uL3 family. In terms of assembly, part of the 50S ribosomal subunit. Forms a cluster with proteins L14 and L19. Methylated by PrmB.

In terms of biological role, one of the primary rRNA binding proteins, it binds directly near the 3'-end of the 23S rRNA, where it nucleates assembly of the 50S subunit. This chain is Large ribosomal subunit protein uL3, found in Shewanella loihica (strain ATCC BAA-1088 / PV-4).